A 333-amino-acid polypeptide reads, in one-letter code: Large ribosomal subunit protein uL3 (333 aa).

The protein belongs to the universal ribosomal protein uL3 family. As to quaternary structure, part of the 50S ribosomal subunit. Forms a cluster with proteins L14 and L24e.

One of the primary rRNA binding proteins, it binds directly near the 3'-end of the 23S rRNA, where it nucleates assembly of the 50S subunit. This Methanocorpusculum labreanum (strain ATCC 43576 / DSM 4855 / Z) protein is Large ribosomal subunit protein uL3.